The following is a 264-amino-acid chain: Protein ADMETOS (264 aa).

In terms of tissue distribution, paternally imprinted expression in the endosperm.

In terms of biological role, product of a dosage-sensitive gene that contributes to the maintenance of paternally and maternally imprinted gene expression in the endosperm in order to balance parental contributions. Underlies postzygotic reproductive isolation by promoting triploid seed arrest in a genetic dosage-dependent manner, thus being a component of postzygotic interploidy hybridization barriers. In Arabidopsis thaliana (Mouse-ear cress), this protein is Protein ADMETOS.